A 185-amino-acid chain; its full sequence is Elongation factor P (185 aa).

This sequence belongs to the elongation factor P family.

Its subcellular location is the cytoplasm. It functions in the pathway protein biosynthesis; polypeptide chain elongation. Its function is as follows. Involved in peptide bond synthesis. Stimulates efficient translation and peptide-bond synthesis on native or reconstituted 70S ribosomes in vitro. Probably functions indirectly by altering the affinity of the ribosome for aminoacyl-tRNA, thus increasing their reactivity as acceptors for peptidyl transferase. The protein is Elongation factor P of Dechloromonas aromatica (strain RCB).